A 111-amino-acid chain; its full sequence is BET1-like protein (111 aa).

The Cytoplasmic segment spans residues 1–86 (MADWTRAQSS…MARSGRDNRK (86 aa)). A phosphoserine mark is found at Ser-9 and Ser-37. One can recognise a t-SNARE coiled-coil homology domain in the interval 15–77 (DILDRENKRM…TGSVKRFSTM (63 aa)). Residues 87-107 (LLCGMAVVLIVAFFILSYLLS) form a helical; Anchor for type IV membrane protein membrane-spanning segment. At 108–111 (RTRT) the chain is on the lumenal side.

Component of a SNARE complex consisting of STX5, YKT6, GOSR1 and BET1L. Interacts with STX5.

Its subcellular location is the golgi apparatus membrane. The protein localises to the golgi apparatus. It is found in the trans-Golgi network membrane. Vesicle SNARE required for targeting and fusion of retrograde transport vesicles with the Golgi complex. Required for the integrity of the Golgi complex. The polypeptide is BET1-like protein (Mus musculus (Mouse)).